The sequence spans 330 residues: Membrane-associated protein VIPP1, chloroplastic (330 aa).

A chloroplast-targeting transit peptide spans 1-64 (MALKASPVTG…LRLACDNRLR (64 aa)). Coiled coils occupy residues 124–259 (SQKQ…LTQI) and 312–329 (KDSE…KAND). The disordered stretch occupies residues 287–312 (LSGSSKKGELPPGRSTVAASTRYPFK).

This sequence belongs to the PspA/Vipp/IM30 family. As to quaternary structure, homomultimer. Complex formation involves interaction via the central alpha-helical domain (71-286).

The protein localises to the plastid. Its subcellular location is the chloroplast inner membrane. The protein resides in the chloroplast thylakoid membrane. Required for plastid vesicle formation and thylakoid membrane biogenesis, but not for functional assembly of thylakoid protein complexes. The chain is Membrane-associated protein VIPP1, chloroplastic from Arabidopsis thaliana (Mouse-ear cress).